We begin with the raw amino-acid sequence, 492 residues long: MKKAILSVSNKTGIVEFAKALTQLNYELYSTGGTKRILDEANVPVRSVSDLTHFPEIMDGRVKTLHPAVHGGILADRNKPQHLNELSEQHIDLIDMVVVNLYPFQQTVANPDVTMDEAIENIDIGGPTMLRAAAKNYKHVTTIVHPADYQEVLTRLRNDSLDESYRQSLMIKVFEHTAEYDEAIVRFFKGDKETLRYGENPQQSAYFVRTSNAKHTIAGAKQLHGKQLSYNNIKDADATLALVKKFDTPAAVAVKHMNPCGVGIGDTLEQAFHHAYEADSQSIFGGIVALNRAVTPELAEQLHSIFLEVIIAPKFTDEALNILKQKKNVRLLEIDMTIDSNEEEFVSVSGGYLVQDKDNYVVPKEEMKVVTEVAPTDEQWEAMLLGWKVVPSVKSNAIILSNNKQTVGIGAGQMNRVGAAKIALERAIEINDHVALVSDGFFPMGDTVELAAQHGIKAIIQPGGSIKDQDSIDMANKHGIAMVVTGTRHFKH.

In terms of domain architecture, MGS-like spans 1–144 (MKKAILSVSN…KNYKHVTTIV (144 aa)).

Belongs to the PurH family.

It catalyses the reaction (6R)-10-formyltetrahydrofolate + 5-amino-1-(5-phospho-beta-D-ribosyl)imidazole-4-carboxamide = 5-formamido-1-(5-phospho-D-ribosyl)imidazole-4-carboxamide + (6S)-5,6,7,8-tetrahydrofolate. The catalysed reaction is IMP + H2O = 5-formamido-1-(5-phospho-D-ribosyl)imidazole-4-carboxamide. Its pathway is purine metabolism; IMP biosynthesis via de novo pathway; 5-formamido-1-(5-phospho-D-ribosyl)imidazole-4-carboxamide from 5-amino-1-(5-phospho-D-ribosyl)imidazole-4-carboxamide (10-formyl THF route): step 1/1. The protein operates within purine metabolism; IMP biosynthesis via de novo pathway; IMP from 5-formamido-1-(5-phospho-D-ribosyl)imidazole-4-carboxamide: step 1/1. The polypeptide is Bifunctional purine biosynthesis protein PurH (Staphylococcus aureus (strain MRSA252)).